The primary structure comprises 1186 residues: MAEATTNTTTIIARADQHDIDLHKASDRVNFGSIREPIDVPYLLGVQTDSFDWLIGNERWQKRVQEDLENGTNTVPHTSGLDEVFQEISPIENFAQTMSLTFSDPYFEEPRHTVQECKEKDYTYSAPLYVNAEFENGDTGEIKSQTVFMGDFPLQTPHGTFIIGGTERVIVSQLVRSPGVYFDRSQDRTSDKEVFGAKIIPSRGAWLEFEIDKRDVLGVRVDRKRKQSAIVFLMAIGMTKDEIADAFKDYPLVMDALAKETVQTQDEALTDLYRKIRPADTPTPEAGKNLLDSFYFNTKRYDLARVGRYKINRKLGLEKDVNDRSLSREDIIATIKYLVTLHAGETKFPGKRDGQDVDLRVDVDDIDHFGNRRIRQVGELIQNQLRTGLSRMERVVRERMTTQDPEAITPQSLINIRPVNATIKEFFGTSQLSQFMDQNNPLAGVTNKRRLSALGPGGLSRDRASMEVRDVHPSHFGRMCPIESPEGPNIGLIGSLATFGRINPFGFIETPYRKVVNGHVTDEVEYMTADRDAEHVIAQANQELDENGNFVKKQALARVGEEEAVDVPVSSVDYMDVSPRQMVSVGASLIPFLEHDEGHRALMGTNMQRQAVPLIESERPLVGTGAEWRAAVDSGDVILAEKPGVVTYVSADIIRTMNDDGTTSSYKLAKFQRSNQTTCYNQVPLIHDGERVEAGTVLADGPATQKGEMALGKNLLIAFMPWNGYNYEDAVIISQRLVQDDTLSSIHIEEYEIDARETKLGAEEITRDLPNVGEDAVANLDERGIIRIGAEVEAGDILVGKVTPKGETELTPEERLLRAIFGEKSREVRDTSLRVPHGETGTVIAVKEITREDAEEDGDELPNGVNQMIRVYIAQHRKITQGDKLSGRHGNKGVISRILPEEDMPFLADGTPVDIMLNPLGVPSRMNLGQVLELHLGWIAHAGWDISLDPDAEAAWKKYVPQGAEKGAPGTPVATPVFDGVRPETIKGLLSCTLPDRDGNKLVGPDGKATLFDGRTGEPFPKPISVGYMYMLKLHHLVDDKIHARSTGPYSMITQQPLGGKAQFGGQRFGEMEVWALEAYGAAYTLHEMMTTKSDDVDGRVRVYGAIVKGENLPPAGIPESFKVLLKEMQSLSLNVEVLNADGVAIDMKEEDDDPSTSSDDLGFNIGARPDAAAKEDQVAEEPEFQ.

Residues 1149–1186 (KEEDDDPSTSSDDLGFNIGARPDAAAKEDQVAEEPEFQ) form a disordered region.

This sequence belongs to the RNA polymerase beta chain family. As to quaternary structure, the RNAP catalytic core consists of 2 alpha, 1 beta, 1 beta' and 1 omega subunit. When a sigma factor is associated with the core the holoenzyme is formed, which can initiate transcription.

The catalysed reaction is RNA(n) + a ribonucleoside 5'-triphosphate = RNA(n+1) + diphosphate. In terms of biological role, DNA-dependent RNA polymerase catalyzes the transcription of DNA into RNA using the four ribonucleoside triphosphates as substrates. The polypeptide is DNA-directed RNA polymerase subunit beta (Bifidobacterium adolescentis (strain ATCC 15703 / DSM 20083 / NCTC 11814 / E194a)).